The following is a 299-amino-acid chain: Bifunctional protein FolD 2 (299 aa).

It belongs to the tetrahydrofolate dehydrogenase/cyclohydrolase family. In terms of assembly, homodimer.

It catalyses the reaction (6R)-5,10-methylene-5,6,7,8-tetrahydrofolate + NADP(+) = (6R)-5,10-methenyltetrahydrofolate + NADPH. The catalysed reaction is (6R)-5,10-methenyltetrahydrofolate + H2O = (6R)-10-formyltetrahydrofolate + H(+). It functions in the pathway one-carbon metabolism; tetrahydrofolate interconversion. In terms of biological role, catalyzes the oxidation of 5,10-methylenetetrahydrofolate to 5,10-methenyltetrahydrofolate and then the hydrolysis of 5,10-methenyltetrahydrofolate to 10-formyltetrahydrofolate. This Arabidopsis thaliana (Mouse-ear cress) protein is Bifunctional protein FolD 2 (FOLD2).